A 272-amino-acid chain; its full sequence is Enoyl-[acyl-carrier-protein] reductase [NADH] 1 (272 aa).

NAD(+)-binding positions include Gly17, 23 to 24, Gln44, 68 to 69, and Ile96; these read SI and DV. Active-site proton acceptor residues include Tyr149 and Tyr159. Residues Lys166 and 195 to 199 contribute to the NAD(+) site; that span reads IKTLA.

This sequence belongs to the short-chain dehydrogenases/reductases (SDR) family. FabI subfamily.

It is found in the cell inner membrane. It carries out the reaction a 2,3-saturated acyl-[ACP] + NAD(+) = a (2E)-enoyl-[ACP] + NADH + H(+). It functions in the pathway lipid metabolism; fatty acid biosynthesis. This chain is Enoyl-[acyl-carrier-protein] reductase [NADH] 1 (fabI1), found in Rhizobium meliloti (strain 1021) (Ensifer meliloti).